The following is a 219-amino-acid chain: MSIQVFCDFDGTITNNDNIMSIMEKFAPPEAEEVKNKILSQELSIQEGVSQLFQLIPTNLHDDIIQFLIETAEIRSGFHEFIQFVKENNISFYVISGGMDFFVYPLLQGIIPKEQIYCNETDFSAEFITVKWPHSCDDHCQNHCGLCKSSLIRKLSDTDDFHIVIGDSITDLQAAKQADKVFARDFLITKCEENHIAYTPFETFQDVQAELKLLLEVKA.

This sequence belongs to the HAD-like hydrolase superfamily. MtnX family.

The enzyme catalyses 2-hydroxy-5-methylsulfanyl-3-oxopent-1-enyl phosphate + H2O = 1,2-dihydroxy-5-(methylsulfanyl)pent-1-en-3-one + phosphate. Its pathway is amino-acid biosynthesis; L-methionine biosynthesis via salvage pathway; L-methionine from S-methyl-5-thio-alpha-D-ribose 1-phosphate: step 4/6. Dephosphorylates 2-hydroxy-3-keto-5-methylthiopentenyl-1-phosphate (HK-MTPenyl-1-P) yielding 1,2-dihydroxy-3-keto-5-methylthiopentene (DHK-MTPene). This chain is 2-hydroxy-3-keto-5-methylthiopentenyl-1-phosphate phosphatase, found in Bacillus cereus (strain B4264).